The primary structure comprises 79 residues: Conotoxin Tr6.3 (79 aa).

A signal peptide spans 1–22; that stretch reads MKLTCVLIISVLFLTASQLITA. The propeptide occupies 23–47; it reads VYSRDKQQYRAARLRDEMRNLKGAR. 3 cysteine pairs are disulfide-bonded: Cys49–Cys62, Cys56–Cys67, and Cys61–Cys77. 4-hydroxyproline occurs at positions 60 and 63.

It belongs to the conotoxin O1 superfamily. As to expression, expressed by the venom duct.

It is found in the secreted. Ion channel inhibitor that inhibits the increase in intracellular calcium upon depolarization in DRG neurons. In vivo, both intraperitoneal and intracranial injections into mice induce hyperactivity. In Conus terebra (Sea snail), this protein is Conotoxin Tr6.3.